Here is a 274-residue protein sequence, read N- to C-terminus: Large ribosomal subunit protein uL2 (274 aa).

2 disordered regions span residues 28 to 54 (KPYA…TRHI) and 221 to 274 (RGTA…RTKK). A compositionally biased stretch (polar residues) spans 39–49 (KTGGRNNNGRI).

Belongs to the universal ribosomal protein uL2 family. As to quaternary structure, part of the 50S ribosomal subunit. Forms a bridge to the 30S subunit in the 70S ribosome.

Functionally, one of the primary rRNA binding proteins. Required for association of the 30S and 50S subunits to form the 70S ribosome, for tRNA binding and peptide bond formation. It has been suggested to have peptidyltransferase activity; this is somewhat controversial. Makes several contacts with the 16S rRNA in the 70S ribosome. In Photorhabdus laumondii subsp. laumondii (strain DSM 15139 / CIP 105565 / TT01) (Photorhabdus luminescens subsp. laumondii), this protein is Large ribosomal subunit protein uL2.